Consider the following 148-residue polypeptide: Ubiquitin conjugating enzyme E2 B (148 aa).

The UBC core domain occupies 2–148 (AAHKRLQKEI…AKEWTKKYAK (147 aa)). The active-site Glycyl thioester intermediate is Cys-87.

Belongs to the ubiquitin-conjugating enzyme family. Interacts with mkkA (via F-box/WD40 repeat domains).

The catalysed reaction is S-ubiquitinyl-[E1 ubiquitin-activating enzyme]-L-cysteine + [E2 ubiquitin-conjugating enzyme]-L-cysteine = [E1 ubiquitin-activating enzyme]-L-cysteine + S-ubiquitinyl-[E2 ubiquitin-conjugating enzyme]-L-cysteine.. The protein operates within protein modification; protein ubiquitination. Functionally, involved in protein ubiquitination and degradation during development. Mediates protein ubiquitination at the mound and finger stage required for subsequent development and may be an essential component of the developmental transition between the induction of postaggregative gene expression and subsequent cell-type differentiation and morphogenesis. ubcB and ubpB differentially control ubiquitination/deubiquitination and degradation of mkkA protein in a cell-type-specific and temporally regulated manner. The sequence is that of Ubiquitin conjugating enzyme E2 B (ubcB) from Dictyostelium discoideum (Social amoeba).